A 631-amino-acid polypeptide reads, in one-letter code: Eukaryotic translation initiation factor 3 subunit L (631 aa).

The 192-residue stretch at 335–526 (TFVSVLIFFI…AETTLLDGER (192 aa)) folds into the PCI domain. Positions 571 to 631 (KSAPLPVRKP…PKSRQARIAA (61 aa)) are disordered. A compositionally biased stretch (low complexity) spans 580–612 (PASSSAPAPATTAAPISKSGESAAPAPAEAPAA).

The protein belongs to the eIF-3 subunit L family. In terms of assembly, component of the eukaryotic translation initiation factor 3 (eIF-3) complex.

It localises to the cytoplasm. Component of the eukaryotic translation initiation factor 3 (eIF-3) complex, which is involved in protein synthesis of a specialized repertoire of mRNAs and, together with other initiation factors, stimulates binding of mRNA and methionyl-tRNAi to the 40S ribosome. The eIF-3 complex specifically targets and initiates translation of a subset of mRNAs involved in cell proliferation. The protein is Eukaryotic translation initiation factor 3 subunit L of Cryptococcus neoformans var. neoformans serotype D (strain B-3501A) (Filobasidiella neoformans).